Reading from the N-terminus, the 373-residue chain is 2-aminoethylphosphonate--pyruvate transaminase (373 aa).

At Lys-191 the chain carries N6-(pyridoxal phosphate)lysine.

It belongs to the class-V pyridoxal-phosphate-dependent aminotransferase family. PhnW subfamily. In terms of assembly, homodimer. It depends on pyridoxal 5'-phosphate as a cofactor.

The enzyme catalyses (2-aminoethyl)phosphonate + pyruvate = phosphonoacetaldehyde + L-alanine. Functionally, involved in phosphonate degradation. This Burkholderia ambifaria (strain MC40-6) protein is 2-aminoethylphosphonate--pyruvate transaminase.